The chain runs to 394 residues: Elongation factor Tu (394 aa).

Residues 10-204 (KPHLNVGTIG…TLDTYIEDPV (195 aa)) enclose the tr-type G domain. Residues 19-26 (GHVDHGKT) are G1. Residue 19-26 (GHVDHGKT) participates in GTP binding. Thr26 is a Mg(2+) binding site. The tract at residues 60–64 (GITIK) is G2. Residues 81–84 (DCPG) form a G3 region. GTP is bound by residues 81 to 85 (DCPGH) and 136 to 139 (NKCD). The G4 stretch occupies residues 136 to 139 (NKCD). The interval 174–176 (SAL) is G5.

The protein belongs to the TRAFAC class translation factor GTPase superfamily. Classic translation factor GTPase family. EF-Tu/EF-1A subfamily. In terms of assembly, monomer.

It localises to the cytoplasm. It catalyses the reaction GTP + H2O = GDP + phosphate + H(+). Functionally, GTP hydrolase that promotes the GTP-dependent binding of aminoacyl-tRNA to the A-site of ribosomes during protein biosynthesis. The chain is Elongation factor Tu from Onion yellows phytoplasma (strain OY-M).